The chain runs to 394 residues: uncharacterized protein (394 aa).

Transmembrane regions (helical) follow at residues 13 to 33, 35 to 55, 73 to 95, 110 to 130, 152 to 172, 179 to 198, 216 to 236, 241 to 261, 267 to 287, 293 to 313, 340 to 360, and 372 to 392; these read LITT…TTMI, MAPT…VLPT, TTMT…TLTV, ALTV…HMVL, IHMV…PTVL, LMVL…TLTV, VLLA…TVLP, VLMV…HMVL, VLMV…PTVL, VLMV…TLTV, MMTL…VTTI, and ILLC…YVSA.

The protein localises to the membrane. This is an uncharacterized protein from Saccharomyces cerevisiae (strain ATCC 204508 / S288c) (Baker's yeast).